We begin with the raw amino-acid sequence, 88 residues long: UPF0298 protein BC_3932 (88 aa).

It belongs to the UPF0298 family.

Its subcellular location is the cytoplasm. This is UPF0298 protein BC_3932 from Bacillus cereus (strain ATCC 14579 / DSM 31 / CCUG 7414 / JCM 2152 / NBRC 15305 / NCIMB 9373 / NCTC 2599 / NRRL B-3711).